A 571-amino-acid polypeptide reads, in one-letter code: MNSLQILSFVGFTLLVAVITWWKVRKTDTGSQQGYFLAGRSLKAPVIAASLMLTNLSTEQLVGLSGQAYKSGMSVMGWEVTSAVTLIFLALIFLPRYLKRGIATIPDFLEERYDKTTRIIIDFCFLIATGVCFLPIVLYSGALALNSLFHVGESLQISHGAAIWLLVILLGLAGILYAVIGGLRAMAVADSINGIGLVIGGLMVPVFGLIAMGKGSFMQGIEQLTTVHAEKLNSIGGPTDPLPIGAAFTGLILVNTFYWCTNQGIVQRTLASKSLAEGQKGALLTAVLKMLDPLVLVLPGLIAFHLYQDLPKADMAYPTLVNNVLPVPMVGFFGAVLFGAVISTFNGFLNSASTLFSMGIYRRIINQNAEPQQLVTVGRKFGFFIAIVSVLVAPWIANAPQGLYSWMKQLNGIYNVPLVTIIIMGFFFPRIPALAAKVAMGIGIISYITINYLVKFDFHFLYVLACTFCINVVVMLVIGFIKPRATPFTFKDAFAVDMKPWKNVKIASIGILFAMIGVYAGLAEFGGYGTRWLAMISYFIAAVVIVYLIFDSWRHRHDPAVTFTPDGKDSL.

Residues 1 to 3 are Cytoplasmic-facing; that stretch reads MNS. A helical membrane pass occupies residues 4–24; that stretch reads LQILSFVGFTLLVAVITWWKV. Topologically, residues 25–74 are periplasmic; that stretch reads RKTDTGSQQGYFLAGRSLKAPVIAASLMLTNLSTEQLVGLSGQAYKSGMS. Residues 75 to 95 traverse the membrane as a helical segment; it reads VMGWEVTSAVTLIFLALIFLP. At 96 to 118 the chain is on the cytoplasmic side; that stretch reads RYLKRGIATIPDFLEERYDKTTR. A helical membrane pass occupies residues 119–139; sequence IIIDFCFLIATGVCFLPIVLY. At 140–162 the chain is on the periplasmic side; it reads SGALALNSLFHVGESLQISHGAA. Residues 163–183 form a helical membrane-spanning segment; the sequence is IWLLVILLGLAGILYAVIGGL. Residues 184–191 are Cytoplasmic-facing; the sequence is RAMAVADS. Residues 192–212 form a helical membrane-spanning segment; that stretch reads INGIGLVIGGLMVPVFGLIAM. The Periplasmic portion of the chain corresponds to 213–240; it reads GKGSFMQGIEQLTTVHAEKLNSIGGPTD. The helical transmembrane segment at 241–261 threads the bilayer; sequence PLPIGAAFTGLILVNTFYWCT. At 262–283 the chain is on the cytoplasmic side; the sequence is NQGIVQRTLASKSLAEGQKGAL. A helical membrane pass occupies residues 284–304; sequence LTAVLKMLDPLVLVLPGLIAF. Residues 305–324 lie on the Periplasmic side of the membrane; that stretch reads HLYQDLPKADMAYPTLVNNV. A helical membrane pass occupies residues 325–345; it reads LPVPMVGFFGAVLFGAVISTF. The Cytoplasmic segment spans residues 346–380; sequence NGFLNSASTLFSMGIYRRIINQNAEPQQLVTVGRK. A helical membrane pass occupies residues 381–401; it reads FGFFIAIVSVLVAPWIANAPQ. At 402–415 the chain is on the periplasmic side; the sequence is GLYSWMKQLNGIYN. The helical transmembrane segment at 416-436 threads the bilayer; sequence VPLVTIIIMGFFFPRIPALAA. Residue K437 is a topological domain, cytoplasmic. The chain crosses the membrane as a helical span at residues 438 to 458; that stretch reads VAMGIGIISYITINYLVKFDF. Topologically, residues 459-460 are periplasmic; that stretch reads HF. Residues 461–481 traverse the membrane as a helical segment; the sequence is LYVLACTFCINVVVMLVIGFI. Topologically, residues 482 to 505 are cytoplasmic; sequence KPRATPFTFKDAFAVDMKPWKNVK. A helical transmembrane segment spans residues 506 to 526; the sequence is IASIGILFAMIGVYAGLAEFG. The Periplasmic segment spans residues 527-532; the sequence is GYGTRW. Residues 533–553 traverse the membrane as a helical segment; that stretch reads LAMISYFIAAVVIVYLIFDSW. At 554–571 the chain is on the cytoplasmic side; that stretch reads RHRHDPAVTFTPDGKDSL.

It belongs to the sodium:solute symporter (SSF) (TC 2.A.21) family.

The protein localises to the cell inner membrane. This is an uncharacterized protein from Escherichia coli (strain K12).